The sequence spans 360 residues: 3-dehydroquinate synthase (360 aa).

NAD(+) contacts are provided by residues 69–74 (DGEAYK), 103–107 (GVIGD), 127–128 (TT), Lys-140, Lys-149, and 167–170 (CLQT). Glu-182, His-245, and His-262 together coordinate Zn(2+).

This sequence belongs to the sugar phosphate cyclases superfamily. Dehydroquinate synthase family. Requires Co(2+) as cofactor. Zn(2+) is required as a cofactor. NAD(+) serves as cofactor.

The protein localises to the cytoplasm. It catalyses the reaction 7-phospho-2-dehydro-3-deoxy-D-arabino-heptonate = 3-dehydroquinate + phosphate. Its pathway is metabolic intermediate biosynthesis; chorismate biosynthesis; chorismate from D-erythrose 4-phosphate and phosphoenolpyruvate: step 2/7. In terms of biological role, catalyzes the conversion of 3-deoxy-D-arabino-heptulosonate 7-phosphate (DAHP) to dehydroquinate (DHQ). The chain is 3-dehydroquinate synthase from Aeromonas hydrophila subsp. hydrophila (strain ATCC 7966 / DSM 30187 / BCRC 13018 / CCUG 14551 / JCM 1027 / KCTC 2358 / NCIMB 9240 / NCTC 8049).